A 252-amino-acid polypeptide reads, in one-letter code: Imidazole glycerol phosphate synthase subunit HisF (252 aa).

Catalysis depends on residues Asp-11 and Asp-130.

The protein belongs to the HisA/HisF family. In terms of assembly, heterodimer of HisH and HisF.

It is found in the cytoplasm. It catalyses the reaction 5-[(5-phospho-1-deoxy-D-ribulos-1-ylimino)methylamino]-1-(5-phospho-beta-D-ribosyl)imidazole-4-carboxamide + L-glutamine = D-erythro-1-(imidazol-4-yl)glycerol 3-phosphate + 5-amino-1-(5-phospho-beta-D-ribosyl)imidazole-4-carboxamide + L-glutamate + H(+). The protein operates within amino-acid biosynthesis; L-histidine biosynthesis; L-histidine from 5-phospho-alpha-D-ribose 1-diphosphate: step 5/9. IGPS catalyzes the conversion of PRFAR and glutamine to IGP, AICAR and glutamate. The HisF subunit catalyzes the cyclization activity that produces IGP and AICAR from PRFAR using the ammonia provided by the HisH subunit. This Staphylococcus aureus (strain bovine RF122 / ET3-1) protein is Imidazole glycerol phosphate synthase subunit HisF.